The sequence spans 901 residues: Protein translocase subunit SecA (901 aa).

ATP contacts are provided by residues Gln-87, 105-109 (GEGKT), and Asp-512. The disordered stretch occupies residues 859–901 (HQDDDSAAAAALAAQTGERKVGRNDPCPCGSGKKYKQCHGRLQ). Cys-885, Cys-887, Cys-896, and His-897 together coordinate Zn(2+). Basic residues predominate over residues 891 to 901 (KKYKQCHGRLQ).

It belongs to the SecA family. As to quaternary structure, monomer and homodimer. Part of the essential Sec protein translocation apparatus which comprises SecA, SecYEG and auxiliary proteins SecDF-YajC and YidC. Requires Zn(2+) as cofactor.

It is found in the cell inner membrane. The protein resides in the cytoplasm. The catalysed reaction is ATP + H2O + cellular proteinSide 1 = ADP + phosphate + cellular proteinSide 2.. Part of the Sec protein translocase complex. Interacts with the SecYEG preprotein conducting channel. Has a central role in coupling the hydrolysis of ATP to the transfer of proteins into and across the cell membrane, serving both as a receptor for the preprotein-SecB complex and as an ATP-driven molecular motor driving the stepwise translocation of polypeptide chains across the membrane. This Escherichia coli O9:H4 (strain HS) protein is Protein translocase subunit SecA.